The sequence spans 257 residues: MEPLIIKLGGVLLDNEKALTRFFTALQEYRTSHSRPLVIVHGGGCLVDSLMKKLQLPVVKKQGLRVTPADQIDIITGALAGSANKTLLSWATRFGLNGVGLCLGDGQLAKVTKISDELGHVGNAEPGSPELLNLLLNAGYLPIISSIGVSIQGELMNVNADQAATAIAETLGADLVLLSDVSGILDGKGQKLTEISATKAQALIDQGIITDGMIVKVNAALEAARTLRRPVEIASWRHAEKLTDLFNGMVIGTRILA.

Residues 43-44 (GG), Arg-65, and Asn-157 each bind substrate. Residues 180-185 (DVSGIL) and 208-210 (IIT) each bind ATP.

Belongs to the acetylglutamate kinase family. ArgB subfamily. Homodimer.

It localises to the cytoplasm. It catalyses the reaction N-acetyl-L-glutamate + ATP = N-acetyl-L-glutamyl 5-phosphate + ADP. Its pathway is amino-acid biosynthesis; L-arginine biosynthesis; N(2)-acetyl-L-ornithine from L-glutamate: step 2/4. Catalyzes the ATP-dependent phosphorylation of N-acetyl-L-glutamate. This is Acetylglutamate kinase from Proteus mirabilis (strain HI4320).